The chain runs to 433 residues: PC-esterase domain-containing protein 1B (433 aa).

Residues 386–433 (PPCHQRQAPVVHRGFPRHFARGPYSNPWRDRPRRPPKHSPAGLESRPQ) are disordered.

The protein belongs to the PC-esterase family.

The protein is PC-esterase domain-containing protein 1B (Pced1b) of Mus musculus (Mouse).